Reading from the N-terminus, the 206-residue chain is Cytochrome c oxidase assembly protein CtaG (206 aa).

The Cytoplasmic segment spans residues 1–12 (MSKKPAGKNSNR). A helical; Signal-anchor for type II membrane protein transmembrane segment spans residues 13–35 (IVAAVCLAFFTGMIGMAYAAVPL). The Periplasmic segment spans residues 36-206 (YKMFCQATGY…ISDTEANLGG (171 aa)). A disordered region spans residues 184–206 (VASSEPVQGTSKIISDTEANLGG). A compositionally biased stretch (polar residues) spans 188-206 (EPVQGTSKIISDTEANLGG).

This sequence belongs to the COX11/CtaG family.

The protein resides in the cell inner membrane. Its function is as follows. Exerts its effect at some terminal stage of cytochrome c oxidase synthesis, probably by being involved in the insertion of the copper B into subunit I. The chain is Cytochrome c oxidase assembly protein CtaG from Mesorhizobium japonicum (strain LMG 29417 / CECT 9101 / MAFF 303099) (Mesorhizobium loti (strain MAFF 303099)).